The chain runs to 384 residues: Probable circularly permuted 1,3-beta-glucanase PGA52 (384 aa).

The N-terminal stretch at 1–17 (MLFSSLLVSTLVSVATA) is a signal peptide. Residues Asn118, Asn128, Asn170, Asn210, and Asn244 are each glycosylated (N-linked (GlcNAc...) asparagine). An ExDxxE motif motif is present at residues 254–259 (EFDIFE). Asn262 and Asn318 each carry an N-linked (GlcNAc...) asparagine glycan. Ser361 carries GPI-anchor amidated serine lipidation. Positions 362–384 (GGVSYQPSFITNLLMTVLTLWVI) are cleaved as a propeptide — removed in mature form.

Belongs to the PGA52 family.

It is found in the cell membrane. The enzyme catalyses Hydrolysis of (1-&gt;3)-beta-D-glucosidic linkages in (1-&gt;3)-beta-D-glucans.. Its function is as follows. Probable circularly permuted 1,3-beta-glucanase involved in cell wall modification through beta-1,3-glucan network alterations such as increased branching or remodeling. In Candida albicans (strain SC5314 / ATCC MYA-2876) (Yeast), this protein is Probable circularly permuted 1,3-beta-glucanase PGA52 (PGA52).